Consider the following 174-residue polypeptide: Nucleoside-triphosphatase THEP1 (174 aa).

ATP is bound by residues 7–14 (GRPGVGKT) and 94–101 (LIIVDEIG).

Belongs to the THEP1 NTPase family.

The catalysed reaction is a ribonucleoside 5'-triphosphate + H2O = a ribonucleoside 5'-diphosphate + phosphate + H(+). Its function is as follows. Has nucleotide phosphatase activity towards ATP, GTP, CTP, TTP and UTP. May hydrolyze nucleoside diphosphates with lower efficiency. The sequence is that of Nucleoside-triphosphatase THEP1 from Thermotoga maritima (strain ATCC 43589 / DSM 3109 / JCM 10099 / NBRC 100826 / MSB8).